The primary structure comprises 387 residues: Mannitol-1-phosphate 5-dehydrogenase (387 aa).

Residue A3–G14 coordinates NAD(+).

Belongs to the mannitol dehydrogenase family.

It catalyses the reaction D-mannitol 1-phosphate + NAD(+) = beta-D-fructose 6-phosphate + NADH + H(+). This chain is Mannitol-1-phosphate 5-dehydrogenase, found in Yersinia pseudotuberculosis serotype O:1b (strain IP 31758).